Reading from the N-terminus, the 204-residue chain is Probable nicotinate-nucleotide adenylyltransferase (204 aa).

This sequence belongs to the NadD family.

It catalyses the reaction nicotinate beta-D-ribonucleotide + ATP + H(+) = deamido-NAD(+) + diphosphate. Its pathway is cofactor biosynthesis; NAD(+) biosynthesis; deamido-NAD(+) from nicotinate D-ribonucleotide: step 1/1. Functionally, catalyzes the reversible adenylation of nicotinate mononucleotide (NaMN) to nicotinic acid adenine dinucleotide (NaAD). This is Probable nicotinate-nucleotide adenylyltransferase from Mycobacterium sp. (strain JLS).